We begin with the raw amino-acid sequence, 544 residues long: Membrane protein insertase YidC (544 aa).

Helical transmembrane passes span 6 to 26 (NLLL…WETD), 343 to 363 (KFLH…TFIV), 418 to 438 (LGGC…YYML), 456 to 476 (LSAQ…MFFI), and 497 to 517 (PVIF…YYIV).

It belongs to the OXA1/ALB3/YidC family. Type 1 subfamily. Interacts with the Sec translocase complex via SecD. Specifically interacts with transmembrane segments of nascent integral membrane proteins during membrane integration.

The protein localises to the cell inner membrane. Required for the insertion and/or proper folding and/or complex formation of integral membrane proteins into the membrane. Involved in integration of membrane proteins that insert both dependently and independently of the Sec translocase complex, as well as at least some lipoproteins. Aids folding of multispanning membrane proteins. This is Membrane protein insertase YidC from Pectobacterium atrosepticum (strain SCRI 1043 / ATCC BAA-672) (Erwinia carotovora subsp. atroseptica).